Here is an 87-residue protein sequence, read N- to C-terminus: MVNMKASMFLTFAGLVLLFVVCYASESEEKEFPREMLSSIFAVDNDFKQEERDCAGYMRECKEKLCCSGYVCSSRWKWRVLPAPWRR.

The N-terminal stretch at 1 to 24 is a signal peptide; it reads MVNMKASMFLTFAGLVLLFVVCYA. Residues 25-52 constitute a propeptide that is removed on maturation; it reads SESEEKEFPREMLSSIFAVDNDFKQEER. Disulfide bonds link C54–C67 and C61–C72.

The protein belongs to the neurotoxin 10 (Hwtx-1) family. 51 (Hntx-8) subfamily. Hntx-8 sub-subfamily. Expressed by the venom gland.

The protein localises to the secreted. Functionally, ion channel inhibitor. This chain is U3-theraphotoxin-Hhn1b, found in Cyriopagopus hainanus (Chinese bird spider).